Here is a 238-residue protein sequence, read N- to C-terminus: tRNA (guanine-N(1)-)-methyltransferase (238 aa).

132-137 is an S-adenosyl-L-methionine binding site; it reads IGDYVL.

This sequence belongs to the RNA methyltransferase TrmD family. Homodimer.

It is found in the cytoplasm. The catalysed reaction is guanosine(37) in tRNA + S-adenosyl-L-methionine = N(1)-methylguanosine(37) in tRNA + S-adenosyl-L-homocysteine + H(+). Its function is as follows. Specifically methylates guanosine-37 in various tRNAs. The polypeptide is tRNA (guanine-N(1)-)-methyltransferase (Nitrobacter hamburgensis (strain DSM 10229 / NCIMB 13809 / X14)).